We begin with the raw amino-acid sequence, 376 residues long: MKLWKRASGALKDRKTLFTIGFSRKTSFRNPDLDSAIIHATSHDDSSVDYHNAHRVYKWIRSSPANLKPLVHALSSRVNRTRSWIVALKALMLVHGVLCCKVTSLQEIRRLPFDLSDFSDGHSRPSKTWGFNAFIRAYFSFLDQYSFFLSDQIRRRHKKPQLDSVNQELERIEKLQSLLHMLLQIRPMADNMKKTLILEAMDCVVIEIFDIYGRICSAIAKLLIKIHPAAGKAEAVIALKIVKKATSQGEDLALYFEFCKEFGVSNAHDIPKFVTIPEEDIKAIEKVINGVEEEEVKKKEDEVEEEKSIILVERPELQTIITDKWEIFEDDFCFTCKDIKETDQHRKFNMDPSPLPLIVIDEPVYFTHTLPDLITF.

The ENTH domain maps to 25–156 (KTSFRNPDLD…FFLSDQIRRR (132 aa)).

It localises to the membrane. Its subcellular location is the clathrin-coated pit. It is found in the golgi apparatus. The protein localises to the cytoplasmic vesicle. The protein resides in the clathrin-coated vesicle. The polypeptide is Putative clathrin assembly protein At1g25240 (Arabidopsis thaliana (Mouse-ear cress)).